The primary structure comprises 334 residues: UDP-N-acetylglucosamine 4,6-dehydratase (inverting) (334 aa).

NADP(+) is bound by residues 13-16 (TGSF), 37-42 (SRDELK), 61-62 (DV), Ala81, Lys85, and 123-124 (LS). Lys85 contacts substrate. Lys127 is a catalytic residue. NADP(+) contacts are provided by Tyr135 and Lys139. Asn167 is a substrate binding site. Residue 168 to 172 (VVGSR) participates in NADP(+) binding. Substrate contacts are provided by Val175, Thr193, Arg252, and Glu255.

Belongs to the polysaccharide synthase family. In terms of assembly, homohexamer. It depends on NADP(+) as a cofactor.

It carries out the reaction UDP-N-acetyl-alpha-D-glucosamine = UDP-2-acetamido-2,6-dideoxy-beta-L-arabino-hex-4-ulose + H2O. In terms of biological role, catalyzes the first step in the biosynthesis of pseudaminic acid, a sialic-acid-like sugar that is used to modify flagellin. Has both C6 dehydratase and C5 epimerase activities that result in the production of both UDP-2-acetamido-2,6-dideoxy-beta-L-arabino-4-hexulose and UDP-2-acetamido-2,6-dideoxy-alpha-D-xylo-4-hexulose. This Campylobacter jejuni subsp. jejuni serotype O:2 (strain ATCC 700819 / NCTC 11168) protein is UDP-N-acetylglucosamine 4,6-dehydratase (inverting) (pseB).